The chain runs to 267 residues: Integral membrane protein 2C (267 aa).

Thr37 is subject to Phosphothreonine. Residues 55-75 (VGGVCYLSMGMVVLLMGLVFA) form a helical; Signal-anchor for type II membrane protein membrane-spanning segment. Positions 136–230 (FGGGDPADII…LCNGKDTYRL (95 aa)) constitute a BRICHOS domain. Cys163 and Cys222 are joined by a disulfide. Asn169 carries N-linked (GlcNAc...) asparagine glycosylation.

It belongs to the ITM2 family. Interacts with BACE1. Interacts with APP. Interacts with STMN2. In terms of processing, type I membrane-bound, as well as soluble, furin has a pre-eminent role in ITM2C proteolytic processing. PCSK7 and PCSK5 may also be involved although to a lesser extent. The soluble form of PCSK7 is incapable of processing ITM2C. Fails to undergo shedding by ADAM10 and intramembrane cleavage by SPPL2B.

The protein resides in the lysosome membrane. It is found in the cell membrane. In terms of biological role, negative regulator of amyloid-beta peptide production. May inhibit the processing of APP by blocking its access to alpha- and beta-secretase. Binding to the beta-secretase-cleaved APP C-terminal fragment is negligible, suggesting that ITM2C is a poor gamma-secretase cleavage inhibitor. May play a role in TNF-induced cell death and neuronal differentiation. The chain is Integral membrane protein 2C (ITM2C) from Macaca fascicularis (Crab-eating macaque).